The sequence spans 244 residues: Phosphoribosyl isomerase A (244 aa).

The Proton acceptor role is filled by Asp-10. Catalysis depends on Asp-129, which acts as the Proton donor.

This sequence belongs to the HisA/HisF family.

The protein localises to the cytoplasm. The catalysed reaction is 1-(5-phospho-beta-D-ribosyl)-5-[(5-phospho-beta-D-ribosylamino)methylideneamino]imidazole-4-carboxamide = 5-[(5-phospho-1-deoxy-D-ribulos-1-ylimino)methylamino]-1-(5-phospho-beta-D-ribosyl)imidazole-4-carboxamide. It catalyses the reaction N-(5-phospho-beta-D-ribosyl)anthranilate = 1-(2-carboxyphenylamino)-1-deoxy-D-ribulose 5-phosphate. It participates in amino-acid biosynthesis; L-histidine biosynthesis; L-histidine from 5-phospho-alpha-D-ribose 1-diphosphate: step 4/9. Its pathway is amino-acid biosynthesis; L-tryptophan biosynthesis; L-tryptophan from chorismate: step 3/5. In terms of biological role, involved in both the histidine and tryptophan biosynthetic pathways. This is Phosphoribosyl isomerase A from Mycobacterium ulcerans (strain Agy99).